The sequence spans 273 residues: Large ribosomal subunit protein uL2 (273 aa).

2 disordered regions span residues 28–53 and 221–273; these read KPFAPLVEKNSKSGGRNNNGRITTRH and RGTA…RRSK. Residues 39–48 show a composition bias toward low complexity; it reads KSGGRNNNGR.

It belongs to the universal ribosomal protein uL2 family. Part of the 50S ribosomal subunit. Forms a bridge to the 30S subunit in the 70S ribosome.

In terms of biological role, one of the primary rRNA binding proteins. Required for association of the 30S and 50S subunits to form the 70S ribosome, for tRNA binding and peptide bond formation. It has been suggested to have peptidyltransferase activity; this is somewhat controversial. Makes several contacts with the 16S rRNA in the 70S ribosome. The protein is Large ribosomal subunit protein uL2 of Enterobacter sp. (strain 638).